We begin with the raw amino-acid sequence, 208 residues long: FMN-dependent NADH:quinone oxidoreductase (208 aa).

Residues 17–19 (SNS), 99–102 (MWNL), and 143–146 (SRGG) each bind FMN.

The protein belongs to the azoreductase type 1 family. In terms of assembly, homodimer. FMN is required as a cofactor.

The catalysed reaction is 2 a quinone + NADH + H(+) = 2 a 1,4-benzosemiquinone + NAD(+). The enzyme catalyses N,N-dimethyl-1,4-phenylenediamine + anthranilate + 2 NAD(+) = 2-(4-dimethylaminophenyl)diazenylbenzoate + 2 NADH + 2 H(+). In terms of biological role, quinone reductase that provides resistance to thiol-specific stress caused by electrophilic quinones. Functionally, also exhibits azoreductase activity. Catalyzes the reductive cleavage of the azo bond in aromatic azo compounds to the corresponding amines. The protein is FMN-dependent NADH:quinone oxidoreductase of Staphylococcus aureus (strain MRSA252).